The primary structure comprises 229 residues: Protein fmp52-2, mitochondrial (229 aa).

A mitochondrion-targeting transit peptide spans 1–44; the sequence is MTAAAVFGCTGAVGSQILATLLASDAFSSVATVSRKLPTAESPK.

Belongs to the FMP52 family.

The protein resides in the mitochondrion outer membrane. The protein is Protein fmp52-2, mitochondrial (fmp522) of Aspergillus terreus (strain NIH 2624 / FGSC A1156).